A 107-amino-acid chain; its full sequence is Anti-adapter protein IraM (107 aa).

The protein belongs to the IraM/RssC family.

The protein resides in the cytoplasm. Functionally, inhibits RpoS proteolysis by regulating RssB activity, thereby increasing the stability of the sigma stress factor RpoS during magnesium starvation. The chain is Anti-adapter protein IraM from Shigella dysenteriae serotype 1 (strain Sd197).